The primary structure comprises 89 residues: Small ribosomal subunit protein uS15c (89 aa).

Belongs to the universal ribosomal protein uS15 family. Part of the 30S ribosomal subunit.

It is found in the plastid. It localises to the organellar chromatophore. The chain is Small ribosomal subunit protein uS15c (rps15) from Paulinella chromatophora.